The sequence spans 683 residues: E3 ubiquitin-protein ligase RNF103 (683 aa).

A run of 4 helical transmembrane segments spans residues 6 to 26, 326 to 346, 366 to 386, and 411 to 431; these read FFLLLYFLVLFVLARFFEAIV, LFVLSLVLVNLMAWMDLFITQ, LLIISWLPVLGFLQLPYLDSF, and MFYTSHPALFLSTYLGHGLLI. Acidic residues predominate over residues 525-542; that stretch reads EEMSESSQDTENDSDSDN. Residues 525–548 are disordered; that stretch reads EEMSESSQDTENDSDSDNMDTFSS. The RING-type zinc-finger motif lies at 619–661; the sequence is CVVCLENFENGCLLMGLPCGHVFHQNCIVMWLAGGRHCCPVCR.

As to quaternary structure, interacts with DERL1 and VCP. As to expression, highly expressed in the normal cerebellum but not in the cerebral cortex.

The protein localises to the endoplasmic reticulum membrane. It carries out the reaction S-ubiquitinyl-[E2 ubiquitin-conjugating enzyme]-L-cysteine + [acceptor protein]-L-lysine = [E2 ubiquitin-conjugating enzyme]-L-cysteine + N(6)-ubiquitinyl-[acceptor protein]-L-lysine.. Its pathway is protein modification; protein ubiquitination. Functionally, acts as an E2-dependent E3 ubiquitin-protein ligase, probably involved in the ER-associated protein degradation pathway. The chain is E3 ubiquitin-protein ligase RNF103 (Rnf103) from Mus musculus (Mouse).